The primary structure comprises 285 residues: 4-diphosphocytidyl-2-C-methyl-D-erythritol kinase (285 aa).

Lys11 is a catalytic residue. Position 93-103 (93-103 (PLAAGLAGGSA)) interacts with ATP. The active site involves Asp135.

The protein belongs to the GHMP kinase family. IspE subfamily.

The catalysed reaction is 4-CDP-2-C-methyl-D-erythritol + ATP = 4-CDP-2-C-methyl-D-erythritol 2-phosphate + ADP + H(+). Its pathway is isoprenoid biosynthesis; isopentenyl diphosphate biosynthesis via DXP pathway; isopentenyl diphosphate from 1-deoxy-D-xylulose 5-phosphate: step 3/6. In terms of biological role, catalyzes the phosphorylation of the position 2 hydroxy group of 4-diphosphocytidyl-2C-methyl-D-erythritol. This Moorella thermoacetica (strain ATCC 39073 / JCM 9320) protein is 4-diphosphocytidyl-2-C-methyl-D-erythritol kinase.